Consider the following 150-residue polypeptide: Arginine repressor (150 aa).

Belongs to the ArgR family.

Its subcellular location is the cytoplasm. The protein operates within amino-acid biosynthesis; L-arginine biosynthesis [regulation]. Its function is as follows. Regulates arginine biosynthesis genes. This chain is Arginine repressor, found in Finegoldia magna (strain ATCC 29328 / DSM 20472 / WAL 2508) (Peptostreptococcus magnus).